An 866-amino-acid polypeptide reads, in one-letter code: Interleukin-17 receptor A (866 aa).

A signal peptide spans 1-32; that stretch reads MGAARSPPSAVPGPLLGLLLLLLGVLAPGGAS. Residues 33-320 lie on the Extracellular side of the membrane; sequence LRLLDHRALV…EPIPDYMPLW (288 aa). Cysteines 43 and 50 form a disulfide. 3 N-linked (GlcNAc...) asparagine glycosylation sites follow: asparagine 49, asparagine 54, and asparagine 67. 2 cysteine pairs are disulfide-bonded: cysteine 57–cysteine 126 and cysteine 185–cysteine 196. N-linked (GlcNAc...) asparagine glycans are attached at residues asparagine 206, asparagine 225, asparagine 242, and asparagine 265. Disulfide bonds link cysteine 245/cysteine 276, cysteine 277/cysteine 303, and cysteine 290/cysteine 294. The chain crosses the membrane as a helical span at residues 321 to 341; sequence VYWFITGISILLVGSVILLIV. The Cytoplasmic portion of the chain corresponds to 342 to 866; sequence CMTWRLAGPG…MGSESEGPSA (525 aa). Residues 377 to 534 enclose the SEFIR domain; sequence PRKVWIIYSA…LMDRFEEVYF (158 aa). 2 positions are modified to phosphoserine: serine 708 and serine 736. Disordered stretches follow at residues 717–736 and 773–840; these read LFLPVDPEDSPLGSSTPMAS and MVLT…RSLQ. The segment covering 788-801 has biased composition (polar residues); the sequence is QSVQSDQGYISRSS. The segment covering 809–819 has biased composition (acidic residues); it reads TEMEEEEEEEQ.

Forms heterodimers with IL17RC; the heterodimer binds IL17A and IL17F homodimers as well as the heterodimer formed by IL17A and IL17F. Forms complexes with 2:1 binding stoichiometry: two receptor chains for one interleukin molecule. IL17A homodimer preferentially drives the formation of IL17RA-IL17RC heterodimeric receptor complex, whereas IL17F homodimer forms predominantly complexes with IL17RC homodimer. IL17A homodimer adopts an asymmetrical ternary structure with one IL17RA molecule, allowing for high affinity interactions of one IL17A monomer with one IL17RA molecule (via D1 and D2 domains), while disfavoring binding of a second IL17RA molecule on the other IL17A monomer. IL17A-IL17F forms complexes with IL17RA-IL17RC, but with lower affinity when compared to IL17A homodimer. IL17RA chain cannot distinguish between IL17A and IL17F molecules, potentially enabling the formation of topologically distinct complexes. Interacts with TRAF3IP2. Forms heterodimers with IL17RE; the heterodimer binds IL17C. In terms of assembly, (Microbial infection) Interacts with SARS coronavirus-2/SARS-CoV-2 virus protein ORF8. Glycosylated. As to expression, widely expressed.

It is found in the cell membrane. Its subcellular location is the secreted. Its function is as follows. Receptor for IL17A and IL17F, major effector cytokines of innate and adaptive immune system involved in antimicrobial host defense and maintenance of tissue integrity. Receptor for IL17A. Receptor for IL17F. Binds to IL17A with higher affinity than to IL17F. Binds IL17A and IL17F homodimers as part of a heterodimeric complex with IL17RC. Also binds heterodimers formed by IL17A and IL17F as part of a heterodimeric complex with IL17RC. Cytokine binding triggers homotypic interaction of IL17RA and IL17RC chains with TRAF3IP2 adapter, leading to TRAF6-mediated activation of NF-kappa-B and MAPkinase pathways, ultimately resulting in transcriptional activation of cytokines, chemokines, antimicrobial peptides and matrix metalloproteinases, with potential strong immune inflammation. Involved in antimicrobial host defense primarily promoting neutrophil activation and recruitment at infection sites to destroy extracellular bacteria and fungi. In secondary lymphoid organs, contributes to germinal center formation by regulating the chemotactic response of B cells to CXCL12 and CXCL13, enhancing retention of B cells within the germinal centers, B cell somatic hypermutation rate and selection toward plasma cells. Plays a role in the maintenance of the integrity of epithelial barriers during homeostasis and pathogen infection. Stimulates the production of antimicrobial beta-defensins DEFB1, DEFB103A, and DEFB104A by mucosal epithelial cells, limiting the entry of microbes through the epithelial barriers. Involved in antiviral host defense through various mechanisms. Enhances immunity against West Nile virus by promoting T cell cytotoxicity. Contributes to Influenza virus clearance by driving the differentiation of B-1a B cells, providing for production of virus-specific IgM antibodies at first line of host defense. Receptor for IL17C as part of a heterodimeric complex with IL17RE. (Microbial infection) Receptor for SARS coronavirus-2/SARS-CoV-2 virus protein ORF8, leading to IL17 pathway activation and an increased secretion of pro-inflammatory factors through activating NF-kappa-B signaling pathway. In Homo sapiens (Human), this protein is Interleukin-17 receptor A.